A 386-amino-acid polypeptide reads, in one-letter code: Succinate--CoA ligase [ADP-forming] subunit beta (386 aa).

An ATP-grasp domain is found at 9–244 (KEILRKYGVP…HDEEDPLETR (236 aa)). ATP contacts are provided by residues Lys-46, 53–55 (GRG), Glu-99, Cys-102, and Glu-107. 2 residues coordinate Mg(2+): Asn-199 and Asp-213. Substrate-binding positions include Asn-264 and 321-323 (GIM).

It belongs to the succinate/malate CoA ligase beta subunit family. In terms of assembly, heterotetramer of two alpha and two beta subunits. Mg(2+) serves as cofactor.

The enzyme catalyses succinate + ATP + CoA = succinyl-CoA + ADP + phosphate. The catalysed reaction is GTP + succinate + CoA = succinyl-CoA + GDP + phosphate. It participates in carbohydrate metabolism; tricarboxylic acid cycle; succinate from succinyl-CoA (ligase route): step 1/1. Succinyl-CoA synthetase functions in the citric acid cycle (TCA), coupling the hydrolysis of succinyl-CoA to the synthesis of either ATP or GTP and thus represents the only step of substrate-level phosphorylation in the TCA. The beta subunit provides nucleotide specificity of the enzyme and binds the substrate succinate, while the binding sites for coenzyme A and phosphate are found in the alpha subunit. In Rickettsia prowazekii (strain Madrid E), this protein is Succinate--CoA ligase [ADP-forming] subunit beta.